We begin with the raw amino-acid sequence, 285 residues long: Bifunctional protein FolD (285 aa).

166 to 168 (GAS) lines the NADP(+) pocket.

This sequence belongs to the tetrahydrofolate dehydrogenase/cyclohydrolase family. Homodimer.

The enzyme catalyses (6R)-5,10-methylene-5,6,7,8-tetrahydrofolate + NADP(+) = (6R)-5,10-methenyltetrahydrofolate + NADPH. It carries out the reaction (6R)-5,10-methenyltetrahydrofolate + H2O = (6R)-10-formyltetrahydrofolate + H(+). It functions in the pathway one-carbon metabolism; tetrahydrofolate interconversion. Functionally, catalyzes the oxidation of 5,10-methylenetetrahydrofolate to 5,10-methenyltetrahydrofolate and then the hydrolysis of 5,10-methenyltetrahydrofolate to 10-formyltetrahydrofolate. The polypeptide is Bifunctional protein FolD (Thioalkalivibrio sulfidiphilus (strain HL-EbGR7)).